The following is a 161-amino-acid chain: Ribosome maturation factor RimP (161 aa).

The protein belongs to the RimP family.

It is found in the cytoplasm. Required for maturation of 30S ribosomal subunits. In Desulfosudis oleivorans (strain DSM 6200 / JCM 39069 / Hxd3) (Desulfococcus oleovorans), this protein is Ribosome maturation factor RimP.